The chain runs to 379 residues: Endonuclease III homolog 1, chloroplastic (379 aa).

Residues Met-1–Glu-54 constitute a chloroplast transit peptide. A HhH domain is found at Lys-244–His-272. Lys-265 functions as the Nucleophile; for N-glycosylase activity in the catalytic mechanism. [4Fe-4S] cluster is bound by residues Cys-340, Cys-347, Cys-350, and Cys-356.

It belongs to the Nth/MutY family. [4Fe-4S] cluster serves as cofactor. As to expression, expressed at low levels in roots, stems, leaves and flowers.

The protein localises to the plastid. Its subcellular location is the chloroplast stroma. It localises to the chloroplast nucleoid. The catalysed reaction is 2'-deoxyribonucleotide-(2'-deoxyribose 5'-phosphate)-2'-deoxyribonucleotide-DNA = a 3'-end 2'-deoxyribonucleotide-(2,3-dehydro-2,3-deoxyribose 5'-phosphate)-DNA + a 5'-end 5'-phospho-2'-deoxyribonucleoside-DNA + H(+). Functionally, bifunctional DNA N-glycosylase with associated apurinic/apyrimidinic (AP) lyase function that catalyzes the first step in base excision repair (BER), the primary repair pathway for the repair of oxidative DNA damage. The DNA N-glycosylase activity releases the damaged DNA base from DNA by cleaving the N-glycosidic bond, leaving an AP site. The AP lyase activity cleaves the phosphodiester bond 3' to the AP site by a beta-elimination. Primarily recognizes and repairs oxidative base damage of pyrimidines. This chain is Endonuclease III homolog 1, chloroplastic, found in Arabidopsis thaliana (Mouse-ear cress).